The chain runs to 120 residues: Guanidine hydrolase-activating protein A (120 aa).

Ni(2+)-binding residues include H2, E3, and E41. Residues C74, C77, C91, and C94 each coordinate Zn(2+).

Belongs to the HypA/HybF family.

Functionally, involved in the maturation of the nickel-dependent guanidine hydrolase GdmH. Required for nickel insertion into the metal center of GdmH. Seems to be required only for GdmH activation and not for activity. This chain is Guanidine hydrolase-activating protein A, found in Synechocystis sp. (strain ATCC 27184 / PCC 6803 / Kazusa).